The following is a 37-amino-acid chain: Turripeptide Lol6.2 (37 aa).

3 cysteine pairs are disulfide-bonded: cysteine 4/cysteine 16, cysteine 8/cysteine 21, and cysteine 15/cysteine 29.

Expressed by the venom duct.

It is found in the secreted. Acts as a neurotoxin by inhibiting an ion channel. In Iotyrris olangoensis (Sea snail), this protein is Turripeptide Lol6.2.